Reading from the N-terminus, the 120-residue chain is Small ribosomal subunit protein uS13 (120 aa).

The tract at residues arginine 92–lysine 120 is disordered.

The protein belongs to the universal ribosomal protein uS13 family. In terms of assembly, part of the 30S ribosomal subunit. Forms a loose heterodimer with protein S19. Forms two bridges to the 50S subunit in the 70S ribosome.

In terms of biological role, located at the top of the head of the 30S subunit, it contacts several helices of the 16S rRNA. In the 70S ribosome it contacts the 23S rRNA (bridge B1a) and protein L5 of the 50S subunit (bridge B1b), connecting the 2 subunits; these bridges are implicated in subunit movement. Contacts the tRNAs in the A and P-sites. This chain is Small ribosomal subunit protein uS13, found in Laribacter hongkongensis (strain HLHK9).